A 262-amino-acid chain; its full sequence is MSDDNSIASMAARLREAQASGRTIAPLRDTCPGGDATLAYAIQQINNDLRKTNGERVVGRKIGLTSPAVQKQLGVDQPDFGALFASMAYGDGEPMPLASLIQPKVEAEIALVLERDLTAEKHTFADLISATAYAVAAIEVVDSRIRDWDIRFFDTVADNASSALFVLGSRPVLLRDIDLTACAMTLAQDGEVLSRGNGAACLGNPLNAAAWLADRMVRLGTPLRAGDVVLTGALGPMVAVKAAGTYAAHIDGLGSVRATFTE.

This sequence belongs to the hydratase/decarboxylase family. MhpD subfamily. A divalent metal cation is required as a cofactor.

It carries out the reaction (S)-4-hydroxy-2-oxopentanoate = (2Z)-2-hydroxypenta-2,4-dienoate + H2O. The protein operates within aromatic compound metabolism; 3-phenylpropanoate degradation. Functionally, catalyzes the conversion of 2-hydroxypentadienoic acid (enolic form of 2-oxopent-4-enoate) to 4-hydroxy-2-ketopentanoic acid. The sequence is that of 2-keto-4-pentenoate hydratase from Burkholderia vietnamiensis (strain G4 / LMG 22486) (Burkholderia cepacia (strain R1808)).